Consider the following 159-residue polypeptide: Crossover junction endodeoxyribonuclease RuvC (159 aa).

Residues D7, E66, and D139 contribute to the active site. 3 residues coordinate Mg(2+): D7, E66, and D139.

This sequence belongs to the RuvC family. In terms of assembly, homodimer which binds Holliday junction (HJ) DNA. The HJ becomes 2-fold symmetrical on binding to RuvC with unstacked arms; it has a different conformation from HJ DNA in complex with RuvA. In the full resolvosome a probable DNA-RuvA(4)-RuvB(12)-RuvC(2) complex forms which resolves the HJ. Mg(2+) serves as cofactor.

The protein localises to the cytoplasm. It catalyses the reaction Endonucleolytic cleavage at a junction such as a reciprocal single-stranded crossover between two homologous DNA duplexes (Holliday junction).. The RuvA-RuvB-RuvC complex processes Holliday junction (HJ) DNA during genetic recombination and DNA repair. Endonuclease that resolves HJ intermediates. Cleaves cruciform DNA by making single-stranded nicks across the HJ at symmetrical positions within the homologous arms, yielding a 5'-phosphate and a 3'-hydroxyl group; requires a central core of homology in the junction. The consensus cleavage sequence is 5'-(A/T)TT(C/G)-3'. Cleavage occurs on the 3'-side of the TT dinucleotide at the point of strand exchange. HJ branch migration catalyzed by RuvA-RuvB allows RuvC to scan DNA until it finds its consensus sequence, where it cleaves and resolves the cruciform DNA. This chain is Crossover junction endodeoxyribonuclease RuvC, found in Sulfurovum sp. (strain NBC37-1).